The chain runs to 650 residues: Fructose-1,6-bisphosphatase class 3 (650 aa).

The protein belongs to the FBPase class 3 family. It depends on Mn(2+) as a cofactor.

It carries out the reaction beta-D-fructose 1,6-bisphosphate + H2O = beta-D-fructose 6-phosphate + phosphate. It participates in carbohydrate biosynthesis; gluconeogenesis. The chain is Fructose-1,6-bisphosphatase class 3 from Finegoldia magna (strain ATCC 29328 / DSM 20472 / WAL 2508) (Peptostreptococcus magnus).